The following is a 920-amino-acid chain: Periplasmic nitrate reductase (920 aa).

The segment at residues 1–29 is a signal peptide (tat-type signal); that stretch reads MNRRDFIKSTAAAAACASAGIALPANLNA. In terms of domain architecture, 4Fe-4S Mo/W bis-MGD-type spans 35–91; that stretch reads WRWDKAVCRFCGTGCGIMVATKNGKIVAVKGDPEAPVNRGLNCIKGYFNAKIMYGDD. [4Fe-4S] cluster is bound by residues Cys-42, Cys-45, Cys-49, and Cys-77. Mo-bis(molybdopterin guanine dinucleotide) is bound by residues Lys-79, Gln-147, Asn-172, Cys-176, 209–216, Met-416, Gln-420, Asn-526, 551–552, Lys-574, Asp-601, and 810–819; these read WGANMAEM, SD, and TGRVLEHWHS. Trp-886 contributes to the substrate binding site. Positions 894 and 911 each coordinate Mo-bis(molybdopterin guanine dinucleotide).

This sequence belongs to the prokaryotic molybdopterin-containing oxidoreductase family. NasA/NapA/NarB subfamily. As to quaternary structure, component of the periplasmic nitrate reductase NapAB complex composed of NapA and NapB. The cofactor is [4Fe-4S] cluster. It depends on Mo-bis(molybdopterin guanine dinucleotide) as a cofactor. In terms of processing, predicted to be exported by the Tat system. The position of the signal peptide cleavage has not been experimentally proven.

Its subcellular location is the periplasm. The enzyme catalyses 2 Fe(II)-[cytochrome] + nitrate + 2 H(+) = 2 Fe(III)-[cytochrome] + nitrite + H2O. Its function is as follows. Catalytic subunit of the periplasmic nitrate reductase complex NapAB. Receives electrons from NapB and catalyzes the reduction of nitrate to nitrite. This is Periplasmic nitrate reductase from Campylobacter hominis (strain ATCC BAA-381 / DSM 21671 / CCUG 45161 / LMG 19568 / NCTC 13146 / CH001A).